The following is a 595-amino-acid chain: Beta-(1--&gt;2)glucan export ATP-binding/permease protein NdvA (595 aa).

5 helical membrane-spanning segments follow: residues 21–41, 56–76, 129–149, 158–178, and 252–272; these read FLLI…EPIL, LVTL…YVLV, IWLE…VLVP, LSIV…LVMQ, and ISIV…QLSV. Residues 21–301 enclose the ABC transmembrane type-1 domain; sequence FLLICTANIT…ISGFINLAVS (281 aa). In terms of domain architecture, ABC transporter spans 335–569; it reads IQFHHVTYEF…DGHFYKLLKR (235 aa). 368–375 serves as a coordination point for ATP; it reads GPTGAGKT.

Belongs to the ABC transporter superfamily. Beta-(1--&gt;2)glucan exporter (TC 3.A.1.108.1) family. Homodimer.

The protein resides in the cell inner membrane. The enzyme catalyses [(1-&gt;2)-beta-D-glucosyl](n)(in) + ATP + H2O = [(1-&gt;2)-beta-D-glucosyl](n)(out) + ADP + phosphate + H(+). Its function is as follows. Involved in beta-(1--&gt;2)glucan export. Transmembrane domains (TMD) form a pore in the inner membrane and the ATP-binding domain (NBD) is responsible for energy generation. The polypeptide is Beta-(1--&gt;2)glucan export ATP-binding/permease protein NdvA (Bartonella bacilliformis).